Reading from the N-terminus, the 1086-residue chain is Isoleucine--tRNA ligase (1086 aa).

The 'HIGH' region motif lies at 53-63 (PFANGLPHYGH). A 'KMSKS' region motif is present at residues 624-628 (KLSKR). Lys-627 contributes to the ATP binding site.

The protein belongs to the class-I aminoacyl-tRNA synthetase family. IleS type 2 subfamily. In terms of assembly, monomer. Zn(2+) serves as cofactor.

It localises to the cytoplasm. The enzyme catalyses tRNA(Ile) + L-isoleucine + ATP = L-isoleucyl-tRNA(Ile) + AMP + diphosphate. In terms of biological role, catalyzes the attachment of isoleucine to tRNA(Ile). As IleRS can inadvertently accommodate and process structurally similar amino acids such as valine, to avoid such errors it has two additional distinct tRNA(Ile)-dependent editing activities. One activity is designated as 'pretransfer' editing and involves the hydrolysis of activated Val-AMP. The other activity is designated 'posttransfer' editing and involves deacylation of mischarged Val-tRNA(Ile). The chain is Isoleucine--tRNA ligase from Rickettsia typhi (strain ATCC VR-144 / Wilmington).